The primary structure comprises 211 residues: LexA repressor (211 aa).

Positions 27–47 (QTEIARAFGFKGVRAVQHHLD) form a DNA-binding region, H-T-H motif. Residues S131 and K168 each act as for autocatalytic cleavage activity in the active site.

Belongs to the peptidase S24 family. As to quaternary structure, homodimer.

The enzyme catalyses Hydrolysis of Ala-|-Gly bond in repressor LexA.. Its function is as follows. Represses a number of genes involved in the response to DNA damage (SOS response), including recA and lexA. In the presence of single-stranded DNA, RecA interacts with LexA causing an autocatalytic cleavage which disrupts the DNA-binding part of LexA, leading to derepression of the SOS regulon and eventually DNA repair. This is LexA repressor from Xylella fastidiosa (strain M12).